The primary structure comprises 128 residues: Tachykinin-4 (128 aa).

An N-terminal signal peptide occupies residues 1-16 (MLPLLALLLLIGPSVC). A propeptide spanning residues 17 to 54 (TTAGDREELAFGAEAESWVTVNLKGIPVPSIELKLQEL) is cleaved from the precursor. Methionine 66 bears the Methionine amide mark. Residues 69-128 (RVGGYQLGRIVQDLLGTRGLSIEGTCRQAASQQRARPGAVTRESLQSREEDEAPLTTSNV) constitute a propeptide that is removed on maturation. The interval 96–128 (QAASQQRARPGAVTRESLQSREEDEAPLTTSNV) is disordered.

It belongs to the tachykinin family. Expressed in hematopoietic cells with highest levels in pre- and pro-B cells but not in later developmental stages. Also detected in uterus, skeletal muscle, brain, spleen, stomach, skin and lactating mammary gland and in cells of myeloid lineage including dendritic and microglial cells and macrophages. In uterus, highest expression is observed in non-pregnant diestrus mice and in day 5 pregnant mice. Compared with mice in diestrus, decreases 2.6-fold in uteri from non-pregnant mice in estrus and 10.2-fold in day 17 pregnant mice. Detected at sites of chronic inflammation such as granulomas.

It is found in the secreted. Its function is as follows. Tachykinins are active peptides which excite neurons, evoke behavioral responses, are potent vasodilators and secretagogues, and contract (directly or indirectly) many smooth muscles. Hemokinin induces plasma extravasation, mast cell degranulation, muscle contraction, salivary secretion and scratching behavior. Increases sperm motility. Induces potent analgesic effects and may play a role in pain modulation. Promotes survival of bone marrow B lineage cells and of cultured LPS-stimulated pre-B cells and may act as an autocrine factor required for B-cell survival and proliferation. Lowers systemic arterial pressure following intravenous injection. Induces interferon-gamma production and may play a role in the inflammatory response. Shows potent affinity and specificity for the NK-1 receptor. In Mus musculus (Mouse), this protein is Tachykinin-4.